Consider the following 269-residue polypeptide: MKAQALLLCSLVLLAQSTDVDDEGSGEVFLQKVSSSVSITASLATTMLTSVTNKTTQNVSVTTIDSLSTSPMHNATSNTSYSQTTPYSQTSLSSSVLISTPQMLNSTPNKPLSSTKLTPKSQSSSQSTKTTKQASKNLTTSKLATSFSSTYMTTSDQPYSNNTANKILLNTTYIYLSTLSKITKLFMQEQNKTTQEPFELITPSSTERDSSTLSKHTNKLKPFKPKTQPIVNMQRTWIYPLTGIVSIVVLLIIMSCIHCYIRRFDEHFE.

N-linked (GlcNAc...) asparagine; by host glycosylation is found at Asn53, Asn58, Asn74, and Asn78. Disordered stretches follow at residues 67–87 and 103–137; these read LSTS…TTPY and MLNS…ASKN. Residues 76–87 show a composition bias toward low complexity; sequence TSNTSYSQTTPY. The span at 103 to 112 shows a compositional bias: polar residues; the sequence is MLNSTPNKPL. Low complexity predominate over residues 113-136; sequence SSTKLTPKSQSSSQSTKTTKQASK. Residues Asn137, Asn161, Asn170, and Asn191 are each glycosylated (N-linked (GlcNAc...) asparagine; by host).

In Saimiriine herpesvirus 2 (strain 11) (SaHV-2), this protein is Gene 51 glycoprotein (51).